The chain runs to 416 residues: Gamma-glutamyl phosphate reductase (416 aa).

This sequence belongs to the gamma-glutamyl phosphate reductase family.

Its subcellular location is the cytoplasm. It catalyses the reaction L-glutamate 5-semialdehyde + phosphate + NADP(+) = L-glutamyl 5-phosphate + NADPH + H(+). The protein operates within amino-acid biosynthesis; L-proline biosynthesis; L-glutamate 5-semialdehyde from L-glutamate: step 2/2. Catalyzes the NADPH-dependent reduction of L-glutamate 5-phosphate into L-glutamate 5-semialdehyde and phosphate. The product spontaneously undergoes cyclization to form 1-pyrroline-5-carboxylate. The sequence is that of Gamma-glutamyl phosphate reductase from Halalkalibacterium halodurans (strain ATCC BAA-125 / DSM 18197 / FERM 7344 / JCM 9153 / C-125) (Bacillus halodurans).